The primary structure comprises 317 residues: Melanocyte-stimulating hormone receptor (317 aa).

The Extracellular portion of the chain corresponds to 1 to 37; the sequence is MPVQGSLRSLVGAVNSTPTASPHLRPATNQTEPQCLE. Residue asparagine 29 is glycosylated (N-linked (GlcNAc...) asparagine). A helical membrane pass occupies residues 38–63; it reads VSVPVGLFLCLGLVSLVENTLVVAVI. The Cytoplasmic segment spans residues 64–72; it reads AKNRNLHSP. The helical transmembrane segment at 73 to 93 threads the bilayer; sequence MYCFICCLALSDLLVSVSNVL. Residues 94–118 are Extracellular-facing; sequence KTAVLLLLEAGALAAQATVVQQLGN. The helical transmembrane segment at 119-140 threads the bilayer; sequence VINMLICSSMVSSLCFLGAIAM. The Cytoplasmic segment spans residues 141–163; the sequence is DRYISIFYALRYHSIVTLARARR. Residues 164-183 traverse the membrane as a helical segment; sequence AIAAVWVASILSSILFFTYY. Residues 184–191 are Extracellular-facing; the sequence is DRTAALLC. A helical transmembrane segment spans residues 192-211; that stretch reads LVVFFLAMLVLMAVLYVHML. At 212–240 the chain is on the cytoplasmic side; the sequence is TQACQHAQGIARLHKRQHPVQQGWGLKGA. A helical transmembrane segment spans residues 241–266; the sequence is ATLAVLLGVFFLCWGPLFLHLTLIAV. Residues 267-279 lie on the Extracellular side of the membrane; sequence CPQHPTCNCIVKN. A helical membrane pass occupies residues 280-300; it reads FKLFLALIICNAIVDPLIYAF. The Cytoplasmic segment spans residues 301-317; the sequence is RSQELRKTLKEVLLFSW.

Belongs to the G-protein coupled receptor 1 family. In terms of assembly, interacts with MGRN1, but does not undergo MGRN1-mediated ubiquitination; this interaction competes with GNAS-binding and thus inhibits agonist-induced cAMP production. Interacts with OPN3; the interaction results in a decrease in MC1R-mediated cAMP signaling and ultimately a decrease in melanin production in melanocytes.

The protein resides in the cell membrane. Receptor for MSH (alpha, beta and gamma) and ACTH. The activity of this receptor is mediated by G proteins which activate adenylate cyclase. Mediates melanogenesis, the production of eumelanin (black/brown) and phaeomelanin (red/yellow), via regulation of cAMP signaling in melanocytes. The protein is Melanocyte-stimulating hormone receptor (MC1R) of Varecia rubra (Red ruffed lemur).